An 86-amino-acid chain; its full sequence is BolA-like protein 2 (86 aa).

Met1 bears the N-acetylmethionine mark.

This sequence belongs to the BolA/IbaG family. As to quaternary structure, interacts with GLRX3; forms a heterotrimeric complex composed by two BOLA2 molecules and one GLRX3 molecule; linked by [2Fe-2S] clusters.

It is found in the cytoplasm. It localises to the nucleus. Acts as a cytosolic iron-sulfur (Fe-S) cluster assembly factor that facilitates [2Fe-2S] cluster insertion into a subset of cytosolic proteins. Acts together with the monothiol glutaredoxin GLRX3. This Mus musculus (Mouse) protein is BolA-like protein 2 (Bola2).